The chain runs to 172 residues: Disulfide bond formation protein B (172 aa).

At 1–13 (MNWLAQLPTQRTP) the chain is on the cytoplasmic side. Residues 14–30 (WLLFSGIVFLLEITALF) traverse the membrane as a helical segment. The Periplasmic portion of the chain corresponds to 31–48 (FQYKMGLAPCIMCIYQRT). An intrachain disulfide couples Cys-40 to Cys-43. The chain crosses the membrane as a helical span at residues 49–64 (AVLGLLIAGIIGTSNP). Over 65–71 (EHRGVRL) the chain is Cytoplasmic. The helical transmembrane segment at 72–89 (LAYSVWAVSSVWGFIIAR) threads the bilayer. The Periplasmic portion of the chain corresponds to 90–145 (EHIEMQTTTDPFAFSCEFEPNFPAFMPLHEWIPSFFAATGDCGNIDWQFAGLSMPA). Cys-105 and Cys-131 are oxidised to a cystine. Residues 146-164 (WMEVIFALFAATLFLLVTS) form a helical membrane-spanning segment. Topologically, residues 165–172 (RLMTKRSL) are cytoplasmic.

This sequence belongs to the DsbB family.

The protein localises to the cell inner membrane. Functionally, required for disulfide bond formation in some periplasmic proteins. Acts by oxidizing the DsbA protein. The protein is Disulfide bond formation protein B of Pseudoalteromonas translucida (strain TAC 125).